The sequence spans 558 residues: Laccase-4 (558 aa).

Positions 1–24 (MGSHMVWFLFLVSFFSVFPAPSES) are cleaved as a signal peptide. 2 Plastocyanin-like domains span residues 32–148 (NVVM…PKRG) and 158–308 (NEKV…YSGT). N-linked (GlcNAc...) asparagine glycans are attached at residues asparagine 37 and asparagine 78. Residues histidine 82 and histidine 84 each coordinate Cu cation. Asparagine 114 carries N-linked (GlcNAc...) asparagine glycosylation. The Cu cation site is built by histidine 127 and histidine 129. Asparagine 187, asparagine 296, asparagine 323, asparagine 330, asparagine 373, asparagine 383, asparagine 400, asparagine 418, and asparagine 441 each carry an N-linked (GlcNAc...) asparagine glycan. One can recognise a Plastocyanin-like 3 domain in the interval 408-542 (DFPKNPPHVF…KMAFLVENGK (135 aa)). Residues histidine 459, histidine 462, and histidine 464 each contribute to the Cu cation site. A glycan (N-linked (GlcNAc...) asparagine) is linked at asparagine 479. Residues histidine 521, cysteine 522, histidine 523, and histidine 527 each coordinate Cu cation. Asparagine 545 is a glycosylation site (N-linked (GlcNAc...) asparagine).

Belongs to the multicopper oxidase family. Cu cation serves as cofactor. Ubiquitous, with higher levels in the inflorescence stem.

It localises to the secreted. The protein localises to the extracellular space. Its subcellular location is the apoplast. It carries out the reaction 4 hydroquinone + O2 = 4 benzosemiquinone + 2 H2O. Functionally, lignin degradation and detoxification of lignin-derived products. Required for secondary xylem cell wall lignification. In Arabidopsis thaliana (Mouse-ear cress), this protein is Laccase-4 (IRX12).